Here is a 127-residue protein sequence, read N- to C-terminus: Glycine cleavage system H protein (127 aa).

In terms of domain architecture, Lipoyl-binding spans 22–104 (EAVIGITQFA…YTDGWMVRVK (83 aa)). Lys-63 bears the N6-lipoyllysine mark.

Belongs to the GcvH family. The glycine cleavage system is composed of four proteins: P, T, L and H. (R)-lipoate serves as cofactor.

Its function is as follows. The glycine cleavage system catalyzes the degradation of glycine. The H protein shuttles the methylamine group of glycine from the P protein to the T protein. The chain is Glycine cleavage system H protein from Nitratidesulfovibrio vulgaris (strain DSM 19637 / Miyazaki F) (Desulfovibrio vulgaris).